Here is a 439-residue protein sequence, read N- to C-terminus: Phenylacetate-coenzyme A ligase (439 aa).

This sequence belongs to the phenylacetyl-CoA ligase family. In terms of assembly, monomer.

It catalyses the reaction 2-phenylacetate + ATP + CoA = phenylacetyl-CoA + AMP + diphosphate. It functions in the pathway aromatic compound metabolism; phenylacetate degradation. Its activity is regulated as follows. Inhibited by divalent cations (zinc, copper, mercury) and by the sulfhydryl reagents 5,5-dithiobis(2-nitrobenzoic acid), N-ethylmaleimide and p-chloromercuribenzoate. In terms of biological role, catalyzes the activation of phenylacetic acid (PA) to phenylacetyl-CoA (PA-CoA). Involved in the phenylalanine metabolism. Can also use CTP and UTP as substrate. This chain is Phenylacetate-coenzyme A ligase (paaK), found in Pseudomonas putida (Arthrobacter siderocapsulatus).